The sequence spans 331 residues: Protein-methionine-sulfoxide reductase catalytic subunit MsrP (331 aa).

The segment at residues 1–54 (MLIKTDRWLRGDDIPASEITPQHLFDQRRRLLAAAALGAAGAALSPWAARRAFA) is a signal peptide (tat-type signal). Mo-molybdopterin is bound by residues Asn86, 89–90 (YE), Cys144, Ser179, Asn227, Arg232, and 243–245 (SAK).

This sequence belongs to the MsrP family. As to quaternary structure, heterodimer of a catalytic subunit (MsrP) and a heme-binding subunit (MsrQ). Mo-molybdopterin serves as cofactor. Post-translationally, predicted to be exported by the Tat system. The position of the signal peptide cleavage has not been experimentally proven.

The protein localises to the periplasm. The enzyme catalyses L-methionyl-[protein] + a quinone + H2O = L-methionyl-(S)-S-oxide-[protein] + a quinol. It carries out the reaction L-methionyl-[protein] + a quinone + H2O = L-methionyl-(R)-S-oxide-[protein] + a quinol. In terms of biological role, part of the MsrPQ system that repairs oxidized periplasmic proteins containing methionine sulfoxide residues (Met-O), using respiratory chain electrons. Thus protects these proteins from oxidative-stress damage caused by reactive species of oxygen and chlorine generated by the host defense mechanisms. MsrPQ is essential for the maintenance of envelope integrity under bleach stress, rescuing a wide series of structurally unrelated periplasmic proteins from methionine oxidation. The catalytic subunit MsrP is non-stereospecific, being able to reduce both (R-) and (S-) diastereoisomers of methionine sulfoxide. The chain is Protein-methionine-sulfoxide reductase catalytic subunit MsrP from Ralstonia nicotianae (strain ATCC BAA-1114 / GMI1000) (Ralstonia solanacearum).